The chain runs to 360 residues: Snurportin-1 (360 aa).

Met-1 is subject to N-acetylmethionine. The disordered stretch occupies residues 1–42 (MEELSQALASSFSVSQDLNSTAAPHPRLSQYKSKYSSLEQSE). The segment at 1 to 65 (MEELSQALAS…LDYVNHARRL (65 aa)) is necessary for interaction with KPNB1 and m3G-cap U1 and U5 snRNP import receptor activity. Residues 1–159 (MEELSQALAS…NRFSSLLPGG (159 aa)) form a necessary for interaction with XPO1 region. A compositionally biased stretch (polar residues) spans 7-22 (ALASSFSVSQDLNSTA). Residues 11 to 73 (SFSVSQDLNS…RLAEDDWTGM (63 aa)) enclose the IBB domain. Phosphoserine is present on Ser-75. The tract at residues 127-129 (GKR) is interaction with m3G-cap structure. Residues 208-328 (MHSKLPEEEG…GMKEKLTHKA (121 aa)) are necessary for binding to the m3G-cap structure. A disordered region spans residues 339 to 360 (LSTPKLKGSSHSPDHPGCLMEN). Ser-350 is subject to Phosphoserine.

The protein belongs to the snurportin family. As to quaternary structure, component of an import snRNP complex composed of KPNB1, SNUPN, SMN1 and ZNF259. Component of a nuclear export receptor complex composed of KPNB1, Ran, SNUPN and XPO1. Found in a trimeric export complex with SNUPN, Ran and XPO1. Interacts (via IBB domain) with KPNB1; the interaction is direct. Interacts with DDX20, IPO7, SMN1, SNRPB and XPO1. Interacts directly with XPO1. Its interaction with XPO1 and binding to m3G-cap U snRNPs appears to be mutually exclusive. Can form homomers.

It is found in the nucleus. The protein localises to the cytoplasm. Functionally, functions as an U snRNP-specific nuclear import adapter. Involved in the trimethylguanosine (m3G)-cap-dependent nuclear import of U snRNPs. Binds specifically to the terminal m3G-cap U snRNAs. The chain is Snurportin-1 (SNUPN) from Homo sapiens (Human).